A 190-amino-acid chain; its full sequence is Iron-sulfur assembly protein 1 (190 aa).

Residues 49-71 form a disordered region; it reads PSLKPSAAGSGSTAPKPVTEREI. Positions 116, 180, and 182 each coordinate Fe cation.

Belongs to the HesB/IscA family.

It is found in the mitochondrion matrix. Its function is as follows. Involved in the assembly of mitochondrial and cytoplasmic iron-sulfur proteins. Probably involved in the binding of an intermediate of Fe/S cluster assembly. This is Iron-sulfur assembly protein 1 (isa1) from Schizosaccharomyces pombe (strain 972 / ATCC 24843) (Fission yeast).